The primary structure comprises 350 residues: Phosphotriesterase-related protein (350 aa).

Residues H22, H24, E169, H201, H230, and D298 each contribute to the a divalent metal cation site.

Belongs to the metallo-dependent hydrolases superfamily. Phosphotriesterase family. It depends on a divalent metal cation as a cofactor.

The protein is Phosphotriesterase-related protein of Drosophila willistoni (Fruit fly).